Consider the following 444-residue polypeptide: MFS-type transporter dbaD (444 aa).

The span at 1-13 shows a compositional bias: polar residues; it reads MTEQPPQNHSVDL. The tract at residues 1–57 is disordered; the sequence is MTEQPPQNHSVDLNQNEDNNENDYRSSSATDAERPCEPKIEESTAKPPTGPPAPPPP. N8 carries N-linked (GlcNAc...) asparagine glycosylation. A compositionally biased stretch (basic and acidic residues) spans 31-44; that stretch reads DAERPCEPKIEEST. Positions 48-57 are enriched in pro residues; sequence PTGPPAPPPP. The next 11 membrane-spanning stretches (helical) occupy residues 62–82, 107–127, 134–154, 159–179, 192–212, 223–243, 267–287, 301–323, 330–350, 356–376, and 394–414; these read LVAWLHVIGGFMLFFNTWGIM, WIGSIQATMLLLVGFFTGSIY, ALLVVGSFCIVFGHMMLSLCK, VLLAQGFCVGIGAGCLFVPCV, TALGLAVSGSSMGGVIYPIVL, WSVRVIGFIALGTLLVPIAVM, MAFTLASLLAFMGLFALLFYI, MAFYIVPILNAASCFGRTIPNAM, FNLIAPCCLAVGVLILCLLAV, LIVIALLSGFFGGALIGLPPL, and MGFGMVGLGVLAGGPAGGAIL. N421 carries an N-linked (GlcNAc...) asparagine glycan. The chain crosses the membrane as a helical span at residues 424 to 444; the sequence is GLWVYGGVTSLVAGFIICIAV.

Belongs to the major facilitator superfamily. Monocarboxylate porter (TC 2.A.1.13) family.

The protein localises to the cell membrane. Functionally, MFS-type transporter; part of the gene cluster that mediates the biosynthesis of the antibiotic 2,4- dihydroxy-3-methyl-6-(2-oxopropyl)benzaldehyde (DHMBA) and its derivatives. Is probably involved in the transport of the metabolites to the environment. The protein is MFS-type transporter dbaD of Emericella nidulans (strain FGSC A4 / ATCC 38163 / CBS 112.46 / NRRL 194 / M139) (Aspergillus nidulans).